The chain runs to 507 residues: Glutamate--tRNA ligase (507 aa).

The short motif at 14–24 is the 'HIGH' region element; the sequence is PSPTGYLHIGG. A 'KMSKS' region motif is present at residues 261–265; that stretch reads KLSKR. Residue Lys264 participates in ATP binding.

The protein belongs to the class-I aminoacyl-tRNA synthetase family. Glutamate--tRNA ligase type 1 subfamily. Monomer.

The protein resides in the cytoplasm. The enzyme catalyses tRNA(Glu) + L-glutamate + ATP = L-glutamyl-tRNA(Glu) + AMP + diphosphate. Its function is as follows. Catalyzes the attachment of glutamate to tRNA(Glu) in a two-step reaction: glutamate is first activated by ATP to form Glu-AMP and then transferred to the acceptor end of tRNA(Glu). The chain is Glutamate--tRNA ligase from Roseiflexus castenholzii (strain DSM 13941 / HLO8).